Reading from the N-terminus, the 186-residue chain is Interferon beta-3 (186 aa).

A signal peptide spans 1–21; that stretch reads MTYRCLLPMVLLLCFSTTALS. The cysteines at positions 52 and 161 are disulfide-linked. Residues asparagine 131 and asparagine 173 are each glycosylated (N-linked (GlcNAc...) asparagine).

The protein belongs to the alpha/beta interferon family. In terms of assembly, monomer.

It is found in the secreted. In terms of biological role, has antiviral, antibacterial and anticancer activities. The chain is Interferon beta-3 (IFNB3) from Bos taurus (Bovine).